The sequence spans 450 residues: Zinc finger protein 446 (450 aa).

Residues R26–P108 enclose the SCAN box domain. A Glycyl lysine isopeptide (Lys-Gly) (interchain with G-Cter in SUMO2) cross-link involves residue K130. Disordered regions lie at residues K130–R155 and E168–P205. S137 bears the Phosphoserine mark. The KRAB domain maps to I208–M254. S218 carries the phosphoserine modification. 2 disordered regions span residues R263–P331 and H354–L389. The span at P275 to P286 shows a compositional bias: pro residues. Over residues G287–P306 the composition is skewed to low complexity. T308 carries the post-translational modification Phosphothreonine. K330 is covalently cross-linked (Glycyl lysine isopeptide (Lys-Gly) (interchain with G-Cter in SUMO2)). 3 C2H2-type zinc fingers span residues Y332–G359, Y395–R422, and H423–P450.

It belongs to the krueppel C2H2-type zinc-finger protein family.

The protein localises to the nucleus. Functionally, may be involved in transcriptional regulation. This Homo sapiens (Human) protein is Zinc finger protein 446 (ZNF446).